We begin with the raw amino-acid sequence, 130 residues long: Arsenical-resistance protein 2 (130 aa).

The Rhodanese domain maps to 17-124 (QRKDFQVVDL…WETHCRESNL (108 aa)).

Functionally, involved in resistance to arsenic compounds. The protein is Arsenical-resistance protein 2 (ARR2) of Saccharomyces cerevisiae (strain ATCC 204508 / S288c) (Baker's yeast).